Consider the following 79-residue polypeptide: MAAIQVKLVRGLAGCPAAHRTIVAGLGLKKRDSTKILPDTPQTMGMIAKVSYLVEWERVDQPAPEGRKARKAKAAARQG.

Belongs to the universal ribosomal protein uL30 family. As to quaternary structure, part of the 50S ribosomal subunit.

The sequence is that of Large ribosomal subunit protein uL30 from Anaeromyxobacter sp. (strain Fw109-5).